Consider the following 126-residue polypeptide: uncharacterized protein (126 aa).

Residues 13–45 are disordered; sequence VAPKAGREEEQPPPPAGLGCGARGEPGRGPLEH.

Its subcellular location is the cytoplasm. The protein resides in the cytoskeleton. It localises to the cilium basal body. This is an uncharacterized protein from Homo sapiens (Human).